We begin with the raw amino-acid sequence, 279 residues long: Cyanocobalamin reductase / alkylcobalamin dealkylase (279 aa).

Substrate-binding positions include D104, 115–118, 129–131, C149, and I160; these read ILAQ and YYQ. Positions 239–279 are disordered; it reads PSEHPSTTSELPLSLLTKPQNSRRARSWLSPSVSPPVSPGP. Low complexity predominate over residues 243–257; the sequence is PSTTSELPLSLLTKP. S247, S272, and S276 each carry phosphoserine.

Belongs to the MMACHC family. Monomer in the absence of bound substrate. Homodimer; dimerization is triggered by binding to FMN or adenosylcobalamin. Interacts with LMBRD1 and ABCD4; the interaction ensures the transport of cobalamin from the lysosome to the cytoplasm. Forms a multiprotein complex with MMADHC, MTR and MTRR; the interaction with MTR could modulate MMACHC-dependent processing of cobalamin. Heterodimer with MMADHC; the interaction might play a role in the regulation of the balance between AdoCbl and MeCbl synthesis. It depends on FAD as a cofactor. The cofactor is FMN. As to expression, detected in liver and kidney (at protein level). Detected in embryos.

It is found in the cytoplasm. It localises to the cytosol. It carries out the reaction 2 cob(II)alamin-[cyanocobalamin reductase] + 2 hydrogen cyanide + NADP(+) = 2 cyanocob(III)alamin + 2 apo-[cyanocobalamin reductase] + NADPH + H(+). The catalysed reaction is apo-[alkylcobalamin reductase] + an R-cob(III)alamin + glutathione = cob(I)alamin-[alkylcobalamin reductase] + an S-substituted glutathione + H(+). It catalyses the reaction apo-[alkylcobalamin reductase] + methylcob(III)alamin + glutathione = S-methyl glutathione + cob(I)alamin-[alkylcobalamin reductase] + H(+). The enzyme catalyses apo-[alkylcobalamin reductase] + adenosylcob(III)alamin + glutathione = S-adenosylglutathione + cob(I)alamin-[alkylcobalamin reductase] + H(+). Cobalamin (vitamin B12) cytosolic chaperone that catalyzes the reductive decyanation of cyanocob(III)alamin (cyanocobalamin, CNCbl) to yield cob(II)alamin and cyanide, using FAD or FMN as cofactors and NADPH as cosubstrate. Cyanocobalamin constitutes the inactive form of vitamin B12 introduced from the diet, and is converted into the active cofactors methylcobalamin (MeCbl) involved in methionine biosynthesis, and 5'-deoxyadenosylcobalamin (AdoCbl) involved in the TCA cycle. Forms a complex with the lysosomal transporter ABCD4 and its chaperone LMBRD1, to transport cobalamin across the lysosomal membrane into the cytosol. The processing of cobalamin in the cytosol occurs in a multiprotein complex composed of at least MMACHC, MMADHC, MTRR (methionine synthase reductase) and MTR (methionine synthase) which may contribute to shuttle safely and efficiently cobalamin towards MTR in order to produce methionine. Also acts as a glutathione transferase by catalyzing the dealkylation of the alkylcob(III)alamins MeCbl and AdoCbl, using the thiolate of glutathione for nucleophilic displacement to generate cob(I)alamin and the corresponding glutathione thioether. The conversion of incoming MeCbl or AdoCbl into a common intermediate cob(I)alamin is necessary to meet the cellular needs for both cofactors. Cysteine and homocysteine cannot substitute for glutathione in this reaction. The polypeptide is Cyanocobalamin reductase / alkylcobalamin dealkylase (Mus musculus (Mouse)).